The following is a 417-amino-acid chain: Tryptophan decarboxylase (417 aa).

Residue Lys263 is modified to N6-(pyridoxal phosphate)lysine.

Belongs to the group II decarboxylase family. Requires pyridoxal 5'-phosphate as cofactor.

It is found in the cytoplasm. It carries out the reaction L-tryptophan + H(+) = tryptamine + CO2. Its activity is regulated as follows. Inhibited by (S)-alpha-fluoromethyltryptophan. Catalyzes the decarboxylation of tryptophan to tryptamine. Tryptamine is a neurotransmitter that induces the release of serotonin, which is suggested to modulate gastrointestinal motility. Therefore, the tryptophan decarboxylase from the gut bacteria Clostridium sporogenes (strain ATCC 15579) may influence host brain and behavior. Has weak activity with tyrosine. Activity against phenylalanine is undetectable. This chain is Tryptophan decarboxylase, found in Clostridium sporogenes (strain ATCC 15579).